The chain runs to 309 residues: UDP-3-O-acyl-N-acetylglucosamine deacetylase (309 aa).

His-78, His-237, and Asp-241 together coordinate Zn(2+). The Proton donor role is filled by His-264.

This sequence belongs to the LpxC family. Requires Zn(2+) as cofactor.

It carries out the reaction a UDP-3-O-[(3R)-3-hydroxyacyl]-N-acetyl-alpha-D-glucosamine + H2O = a UDP-3-O-[(3R)-3-hydroxyacyl]-alpha-D-glucosamine + acetate. Its pathway is glycolipid biosynthesis; lipid IV(A) biosynthesis; lipid IV(A) from (3R)-3-hydroxytetradecanoyl-[acyl-carrier-protein] and UDP-N-acetyl-alpha-D-glucosamine: step 2/6. Functionally, catalyzes the hydrolysis of UDP-3-O-myristoyl-N-acetylglucosamine to form UDP-3-O-myristoylglucosamine and acetate, the committed step in lipid A biosynthesis. This is UDP-3-O-acyl-N-acetylglucosamine deacetylase from Methylobacillus flagellatus (strain ATCC 51484 / DSM 6875 / VKM B-1610 / KT).